Consider the following 307-residue polypeptide: MAQASRKAVVAIAGSSGMIGSALAAALRANDHLVLRIVRRTPANAEELHWNPESGEFDTDAITDVDAVVNLCGVNLGQRRWSGSFKQNLRDSRITPTEVLSAAVAEAGVKTFINASAVGYYGNTRDRVVDENDRAGTGFLAQLCQDWEGATLPAQYAGTRVILARTGMVLAQEAGVLSRMRPLFSFALGARIGNGRQYMSWISLEDEVRALLFAISHQSLSGPLNLTGPAPVTNAEFTTAFGRAINRPTPLMLPSFAVRAALGEFADEGLLIGQRAIPAALERAGFQFHHNTIGEALSYATTRPSQN.

This sequence belongs to the NAD(P)-dependent epimerase/dehydratase family. SDR39U1 subfamily.

The chain is Epimerase family protein ML0860 from Mycobacterium leprae (strain TN).